A 331-amino-acid chain; its full sequence is Methionyl-tRNA formyltransferase (331 aa).

111–114 (SLLP) is a binding site for (6S)-5,6,7,8-tetrahydrofolate.

It belongs to the Fmt family.

The enzyme catalyses L-methionyl-tRNA(fMet) + (6R)-10-formyltetrahydrofolate = N-formyl-L-methionyl-tRNA(fMet) + (6S)-5,6,7,8-tetrahydrofolate + H(+). Its function is as follows. Attaches a formyl group to the free amino group of methionyl-tRNA(fMet). The formyl group appears to play a dual role in the initiator identity of N-formylmethionyl-tRNA by promoting its recognition by IF2 and preventing the misappropriation of this tRNA by the elongation apparatus. The polypeptide is Methionyl-tRNA formyltransferase (Thermosynechococcus vestitus (strain NIES-2133 / IAM M-273 / BP-1)).